A 328-amino-acid polypeptide reads, in one-letter code: Probable cell division protein WhiA (328 aa).

Residues 275–308 (SLEELGRLAEPPMTKDAVAGRIRRLLSMADKRAE) constitute a DNA-binding region (H-T-H motif).

This sequence belongs to the WhiA family.

Functionally, involved in cell division and chromosome segregation. The protein is Probable cell division protein WhiA of Corynebacterium jeikeium (strain K411).